Reading from the N-terminus, the 509-residue chain is Putative (R)-citramalate synthase CimA (509 aa).

In terms of domain architecture, Pyruvate carboxyltransferase spans 14-267 (VRIFDTTLRD…DTGIRTERLT (254 aa)).

Belongs to the alpha-IPM synthase/homocitrate synthase family. As to quaternary structure, homodimer.

It catalyses the reaction pyruvate + acetyl-CoA + H2O = (3R)-citramalate + CoA + H(+). Its pathway is amino-acid biosynthesis; L-isoleucine biosynthesis; 2-oxobutanoate from pyruvate: step 1/3. In terms of biological role, catalyzes the condensation of pyruvate and acetyl-coenzyme A to form (R)-citramalate. This Methanopyrus kandleri (strain AV19 / DSM 6324 / JCM 9639 / NBRC 100938) protein is Putative (R)-citramalate synthase CimA (cimA).